A 270-amino-acid chain; its full sequence is Formamidopyrimidine-DNA glycosylase (270 aa).

Catalysis depends on Pro-2, which acts as the Schiff-base intermediate with DNA. Glu-3 serves as the catalytic Proton donor. The active-site Proton donor; for beta-elimination activity is Lys-58. The DNA site is built by His-91, Arg-110, and Lys-151. An FPG-type zinc finger spans residues 236 to 270 (FVYGRGGEACKVCGTELRNVVLGQRASVFCPRCQR). The active-site Proton donor; for delta-elimination activity is the Arg-260.

The protein belongs to the FPG family. As to quaternary structure, monomer. Requires Zn(2+) as cofactor.

It catalyses the reaction Hydrolysis of DNA containing ring-opened 7-methylguanine residues, releasing 2,6-diamino-4-hydroxy-5-(N-methyl)formamidopyrimidine.. The enzyme catalyses 2'-deoxyribonucleotide-(2'-deoxyribose 5'-phosphate)-2'-deoxyribonucleotide-DNA = a 3'-end 2'-deoxyribonucleotide-(2,3-dehydro-2,3-deoxyribose 5'-phosphate)-DNA + a 5'-end 5'-phospho-2'-deoxyribonucleoside-DNA + H(+). Its function is as follows. Involved in base excision repair of DNA damaged by oxidation or by mutagenic agents. Acts as a DNA glycosylase that recognizes and removes damaged bases. Has a preference for oxidized purines, such as 7,8-dihydro-8-oxoguanine (8-oxoG). Has AP (apurinic/apyrimidinic) lyase activity and introduces nicks in the DNA strand. Cleaves the DNA backbone by beta-delta elimination to generate a single-strand break at the site of the removed base with both 3'- and 5'-phosphates. The sequence is that of Formamidopyrimidine-DNA glycosylase from Pseudomonas fluorescens (strain SBW25).